A 561-amino-acid polypeptide reads, in one-letter code: Methyl-accepting chemotaxis protein CtpM (561 aa).

The Cytoplasmic portion of the chain corresponds to 1 to 11; it reads MMRLTLKSKVL. Residues 12-32 form a helical membrane-spanning segment; that stretch reads LLAMVPVLLFALVLSGGAVLI. Residues 33-205 lie on the Periplasmic side of the membrane; sequence LKKQADAEVK…KQDIDERIGT (173 aa). The chain crosses the membrane as a helical span at residues 206–226; sequence LIASIVGIAGVLLVVLLVIGL. Over 227–561 the chain is Cytoplasmic; it reads AVANAMLRPL…LGRLVGQFRI (335 aa). One can recognise an HAMP domain in the interval 230–284; sequence NAMLRPLHQIRQNLDDIAAGEGDLTRRLPVTSYDELGELAGSFNRFVEKIHGLVR. Residues 289-525 enclose the Methyl-accepting transducer domain; it reads MTGDLKQLVE…EINRSVHQIA (237 aa). Positions 333–357 are disordered; sequence HEVAQSAQRAAEAAQQTDHEGQAAK. The span at 336 to 348 shows a compositional bias: low complexity; the sequence is AQSAQRAAEAAQQ.

It belongs to the methyl-accepting chemotaxis (MCP) protein family. In terms of assembly, homodimer. The ligand-binding domain (LBD) is dimeric in the presence and the absence of ligands.

It is found in the cell inner membrane. Functionally, chemotactic-signal transducers respond to changes in the concentration of attractants and repellents in the environment, transduce a signal from the outside to the inside of the cell, and facilitate sensory adaptation through the variation of the level of methylation. Directly recognizes five C4-dicarboxylic acids: L-malic, citramalic, citraconic, bromosuccinic and methylsuccinic acids. Three of the identified ligands act as chemoattractants (L-malic, D,L-bromosuccinic and L-citramalic acids) whereas two of them (L-methylsuccinic and citraconic acids) behave as antagonists by inhibiting the downstream chemotaxis signaling cascade. Antagonists compete with chemoattractants, thereby decreasing the affinity for chemoattractants and the subsequent chemotactic response. Acts through the che chemosensory pathway. In Pseudomonas aeruginosa (strain ATCC 15692 / DSM 22644 / CIP 104116 / JCM 14847 / LMG 12228 / 1C / PRS 101 / PAO1), this protein is Methyl-accepting chemotaxis protein CtpM.